Reading from the N-terminus, the 662-residue chain is DNA topoisomerase 4 subunit B (662 aa).

ATP contacts are provided by residues Y20, N60, D87, 129–135, and K359; that span reads GLHGVGV. Positions 439-553 constitute a Toprim domain; it reads TELFIVEGDS…DGHLYLAKPP (115 aa). Mg(2+) is bound by residues E445, D518, and D520.

The protein belongs to the type II topoisomerase family. ParE type 1 subfamily. As to quaternary structure, heterotetramer composed of ParC and ParE. It depends on Mg(2+) as a cofactor. Mn(2+) serves as cofactor. Requires Ca(2+) as cofactor.

It carries out the reaction ATP-dependent breakage, passage and rejoining of double-stranded DNA.. Its function is as follows. Topoisomerase IV is essential for chromosome segregation. It relaxes supercoiled DNA. Performs the decatenation events required during the replication of a circular DNA molecule. The polypeptide is DNA topoisomerase 4 subunit B (Rickettsia bellii (strain RML369-C)).